We begin with the raw amino-acid sequence, 810 residues long: Cell division control protein 48 homolog E (810 aa).

An N-acetylserine modification is found at Ser-2. The residue at position 41 (Ser-41) is a Phosphoserine. Residues 248–255 (GPPGSGKT) and 521–528 (GPPGCGKT) contribute to the ATP site.

This sequence belongs to the AAA ATPase family.

It is found in the nucleus. Its subcellular location is the cytoplasm. It localises to the cytoskeleton. The protein resides in the phragmoplast. Its function is as follows. Probably functions in cell division and growth processes. Interacts with certain SNAREs as part of specialized membrane fusion events where vesicles from the same organelle fuse (homotypic fusion). The polypeptide is Cell division control protein 48 homolog E (CDC48E) (Arabidopsis thaliana (Mouse-ear cress)).